The following is a 189-amino-acid chain: MTKSNETERMEESEETHSSDIRSASESDHASGSDHTESADEIPTADAEQGELEQLEKLKDDLARERAAFHNFRMARAKQAEIERDRTRSEVIRVILPVLDDFARIEKHSTLDDPFKAVVTKLRSAMEKIGLTAFGNPGDPFNPELHEALFQNPSPDVQTETVQDVIEAGYCLGETVIRAAKVVVQVPNG.

Residues 1–38 are compositionally biased toward basic and acidic residues; that stretch reads MTKSNETERMEESEETHSSDIRSASESDHASGSDHTES. The interval 1–54 is disordered; that stretch reads MTKSNETERMEESEETHSSDIRSASESDHASGSDHTESADEIPTADAEQGELEQ.

Belongs to the GrpE family. As to quaternary structure, homodimer.

The protein resides in the cytoplasm. Its function is as follows. Participates actively in the response to hyperosmotic and heat shock by preventing the aggregation of stress-denatured proteins, in association with DnaK and GrpE. It is the nucleotide exchange factor for DnaK and may function as a thermosensor. Unfolded proteins bind initially to DnaJ; upon interaction with the DnaJ-bound protein, DnaK hydrolyzes its bound ATP, resulting in the formation of a stable complex. GrpE releases ADP from DnaK; ATP binding to DnaK triggers the release of the substrate protein, thus completing the reaction cycle. Several rounds of ATP-dependent interactions between DnaJ, DnaK and GrpE are required for fully efficient folding. In Tropheryma whipplei (strain Twist) (Whipple's bacillus), this protein is Protein GrpE.